Reading from the N-terminus, the 411-residue chain is Tyrosine--tRNA ligase (411 aa).

Tyr-34 lines the L-tyrosine pocket. The 'HIGH' region signature appears at 39–48; it reads CTATSLHIGS. L-tyrosine-binding residues include Tyr-171 and Gln-175. The 'KMSKS' region motif lies at 231-235; sequence KMGKT. ATP is bound at residue Lys-234. Residues 345 to 411 enclose the S4 RNA-binding domain; it reads ISAYELFYEA…GKKRHILVRV (67 aa).

This sequence belongs to the class-I aminoacyl-tRNA synthetase family. TyrS type 1 subfamily. In terms of assembly, homodimer.

It is found in the cytoplasm. The catalysed reaction is tRNA(Tyr) + L-tyrosine + ATP = L-tyrosyl-tRNA(Tyr) + AMP + diphosphate + H(+). In terms of biological role, catalyzes the attachment of tyrosine to tRNA(Tyr) in a two-step reaction: tyrosine is first activated by ATP to form Tyr-AMP and then transferred to the acceptor end of tRNA(Tyr). The chain is Tyrosine--tRNA ligase from Rickettsia rickettsii (strain Sheila Smith).